Consider the following 100-residue polypeptide: Large ribosomal subunit protein eL30 (100 aa).

It belongs to the eukaryotic ribosomal protein eL30 family.

The protein is Large ribosomal subunit protein eL30 (rpl30e) of Aeropyrum pernix (strain ATCC 700893 / DSM 11879 / JCM 9820 / NBRC 100138 / K1).